A 160-amino-acid chain; its full sequence is MNFNHFDEQGHAVMVDVSSKQETMRTATAAADVIMSAELLAAIARKSVSKGDVLGVARLAGIMAAKKTDDLIPLSHPLSLHSVSIEFDQDPAACRIQARCTVRAFERTGVEMEAMTGAAVAALTIYDMCKGTDKSISIANIRLLYKEGGKSGLYRREEAA.

Substrate contacts are provided by residues 74–76 (LSH) and 112–113 (ME). Residue Asp127 is part of the active site.

This sequence belongs to the MoaC family. Homohexamer; trimer of dimers.

It carries out the reaction (8S)-3',8-cyclo-7,8-dihydroguanosine 5'-triphosphate = cyclic pyranopterin phosphate + diphosphate. The protein operates within cofactor biosynthesis; molybdopterin biosynthesis. Its function is as follows. Catalyzes the conversion of (8S)-3',8-cyclo-7,8-dihydroguanosine 5'-triphosphate to cyclic pyranopterin monophosphate (cPMP). The polypeptide is Cyclic pyranopterin monophosphate synthase (Trichlorobacter lovleyi (strain ATCC BAA-1151 / DSM 17278 / SZ) (Geobacter lovleyi)).